A 154-amino-acid chain; its full sequence is Aspartate carbamoyltransferase regulatory chain (154 aa).

The Zn(2+) site is built by Cys-109, Cys-114, Cys-138, and Cys-141.

Belongs to the PyrI family. In terms of assembly, contains catalytic and regulatory chains. Zn(2+) serves as cofactor.

Its function is as follows. Involved in allosteric regulation of aspartate carbamoyltransferase. The sequence is that of Aspartate carbamoyltransferase regulatory chain from Yersinia pseudotuberculosis serotype O:1b (strain IP 31758).